The sequence spans 428 residues: Glutamate-1-semialdehyde 2,1-aminomutase (428 aa).

Lysine 265 is modified (N6-(pyridoxal phosphate)lysine).

The protein belongs to the class-III pyridoxal-phosphate-dependent aminotransferase family. HemL subfamily. As to quaternary structure, homodimer. It depends on pyridoxal 5'-phosphate as a cofactor.

It is found in the cytoplasm. It carries out the reaction (S)-4-amino-5-oxopentanoate = 5-aminolevulinate. Its pathway is porphyrin-containing compound metabolism; protoporphyrin-IX biosynthesis; 5-aminolevulinate from L-glutamyl-tRNA(Glu): step 2/2. The sequence is that of Glutamate-1-semialdehyde 2,1-aminomutase from Shewanella sediminis (strain HAW-EB3).